The sequence spans 401 residues: L-rhamnonate dehydratase (401 aa).

Substrate contacts are provided by His29 and Arg55. Mg(2+)-binding residues include Asp222, Glu248, and Glu276. His325 acts as the Proton acceptor in catalysis. Substrate is bound at residue Glu345.

Belongs to the mandelate racemase/muconate lactonizing enzyme family. RhamD subfamily. Homooctamer; tetramer of dimers. Mg(2+) serves as cofactor.

The catalysed reaction is L-rhamnonate = 2-dehydro-3-deoxy-L-rhamnonate + H2O. In terms of biological role, catalyzes the dehydration of L-rhamnonate to 2-keto-3-deoxy-L-rhamnonate (KDR). The polypeptide is L-rhamnonate dehydratase (Tolumonas auensis (strain DSM 9187 / NBRC 110442 / TA 4)).